A 33-amino-acid chain; its full sequence is Photosystem II reaction center protein Psb30 (33 aa).

Residues 5–25 (VLAQLTVLTLIVISGPLVIAL) form a helical membrane-spanning segment.

This sequence belongs to the Psb30/Ycf12 family. In terms of assembly, PSII is composed of 1 copy each of membrane proteins PsbA, PsbB, PsbC, PsbD, PsbE, PsbF, PsbH, PsbI, PsbJ, PsbK, PsbL, PsbM, PsbT, PsbX, PsbY, PsbZ, Psb30/Ycf12, peripheral proteins of the oxygen-evolving complex and a large number of cofactors. It forms dimeric complexes.

The protein resides in the plastid. It localises to the chloroplast thylakoid membrane. In terms of biological role, a core subunit of photosystem II (PSII), probably helps stabilize the reaction center. The sequence is that of Photosystem II reaction center protein Psb30 from Cycas taitungensis (Prince sago).